The sequence spans 80 residues: Serine rich endogenous peptide 18 (80 aa).

An N-terminal signal peptide occupies residues 1–25 (MYNVVVCLLTLSFLLLTGLSNTAEA). The SCOOP motif motif lies at 45–59 (KAEVGGSCSPHAHGR). The disordered stretch occupies residues 50-80 (GSCSPHAHGRGPPNRPGSSNIPGSPKRCTKP). The SxS motif essential for MIK2 binding motif lies at 51-53 (SCS).

This sequence belongs to the serine rich endogenous peptide (SCOOP) phytocytokine family. In terms of assembly, interacts with MIK2 (via extracellular leucine-rich repeat domain); this interaction triggers the formation of complex between MIK2 and the BAK1/SERK3 and SERK4 coreceptors, and subsequent BAK1 activation by phosphorylation.

Its subcellular location is the cell membrane. The protein resides in the secreted. It localises to the extracellular space. The protein localises to the apoplast. In terms of biological role, brassicaceae-specific phytocytokine (plant endogenous peptide released into the apoplast) perceived by MIK2 in a BAK1/SERK3 and SERK4 coreceptors-dependent manner, that modulates various physiological and antimicrobial processes including growth prevention and reactive oxygen species (ROS) response regulation. This chain is Serine rich endogenous peptide 18, found in Arabidopsis thaliana (Mouse-ear cress).